Reading from the N-terminus, the 604-residue chain is Choline transporter-like protein 3 (604 aa).

2 N-linked (GlcNAc...) asparagine glycosylation sites follow: Asn-90 and Asn-103. The next 5 helical transmembrane spans lie at 165–185, 195–215, 237–257, 286–306, and 330–350; these read DTILGLCAFVFALSLAMLFTF, IIISLVILGLLFVCGVFWWLY, LAFAVITTVVTVVLLALIFTL, LWTFAILVFFWVLWVAVLLSL, and YLWWYHLIGLIWTSEFILTCQ. N-linked (GlcNAc...) asparagine glycans are attached at residues Asn-454 and Asn-472. A run of 2 helical transmembrane segments spans residues 485-505 and 514-534; these read FIIFLGKVLVVCFSVFGGLMA and VWAIPLLLVAFFAYLAAHSFL. The span at 581-592 shows a compositional bias: polar residues; that stretch reads NARSQGHKNSLP. Residues 581–604 are disordered; sequence NARSQGHKNSLPNEEGTELRPIVR.

Belongs to the CTL (choline transporter-like) family. In terms of tissue distribution, expressed in colon, kidney and ileum.

It is found in the membrane. This is Choline transporter-like protein 3 (Slc44a3) from Rattus norvegicus (Rat).